The following is a 292-amino-acid chain: Cyclic dipurine nucleotide synthase (292 aa).

Position 47 (glutamine 47) interacts with ATP. Residue 48-52 participates in GTP binding; it reads GSYRN. Mg(2+)-binding residues include aspartate 61 and aspartate 63. ATP contacts are provided by residues aspartate 63, 121 to 122, and aspartate 136; that span reads NK. Aspartate 136 contacts Mg(2+). Lysine 197 and serine 216 together coordinate GTP.

It belongs to the CD-NTase family. E01 subfamily. The cofactor is Mg(2+).

The enzyme catalyses 2 ATP = 3',3'-c-di-AMP + 2 diphosphate. It carries out the reaction 2 GTP = 3',3'-c-di-GMP + 2 diphosphate. The catalysed reaction is GTP + ATP = 3',3'-cGAMP + 2 diphosphate. Functionally, cyclic nucleotide synthase (second messenger synthase) of a CBASS antivirus system. CBASS (cyclic oligonucleotide-based antiphage signaling system) provides immunity against bacteriophage. The CD-NTase protein synthesizes cyclic nucleotides in response to infection; these serve as specific second messenger signals. The signals activate a diverse range of effectors, leading to bacterial cell death and thus abortive phage infection. A type I-A(GA) CBASS system. Its function is as follows. Cyclic dinucleotide synthase that catalyzes the synthesis of 3'3'-cyclic GMP-AMP (cGAMP) from GTP and ATP, and of c-di-AMP and c-di-GMP, that are second messengers for cell signal transduction. This Elizabethkingia meningoseptica (Chryseobacterium meningosepticum) protein is Cyclic dipurine nucleotide synthase.